Consider the following 685-residue polypeptide: Kinesin-like protein KIP2 (685 aa).

2 disordered regions span residues 11–46 (EHVGSAGASLPQTPGSRSFALGAHPGPQKRIGGPAQ) and 63–101 (SRPSSPYMQASPLLKGSESGGSAGSPQSPDAPSSASGAS). The span at 86–101 (GSPQSPDAPSSASGAS) shows a compositional bias: low complexity. One can recognise a Kinesin motor domain in the interval 113 to 446 (NVSVAIRIKP…VRFASRAKNI (334 aa)). 185–192 (GMTGSGKT) serves as a coordination point for ATP. Coiled-coil stretches lie at residues 464–486 (IIQNLRKQLDEQHETIVMLRRSA) and 520–663 (LEVE…SALS). A disordered region spans residues 485-510 (SAAAPSGNGSTSPLDSPGVGGTSLSE).

It belongs to the TRAFAC class myosin-kinesin ATPase superfamily. Kinesin family.

Its subcellular location is the cytoplasm. It localises to the cytoskeleton. Required for assembly of the mitotic spindle. The chain is Kinesin-like protein KIP2 (KIP2) from Eremothecium gossypii (strain ATCC 10895 / CBS 109.51 / FGSC 9923 / NRRL Y-1056) (Yeast).